The sequence spans 357 residues: uncharacterized protein (357 aa).

Ser72 bears the Phosphoserine mark. Disordered stretches follow at residues 79 to 98, 264 to 290, and 323 to 357; these read GVNE…RPSR, QKQL…GASV, and ISDE…EPLK. Acidic residues predominate over residues 324-335; that stretch reads SDEDEEDEEEDS.

This is an uncharacterized protein from Saccharomyces cerevisiae (strain ATCC 204508 / S288c) (Baker's yeast).